We begin with the raw amino-acid sequence, 199 residues long: MSEPLQELGNYIATKRADCVLAWDVTNKELNLDVTPSNIVGLVEFLKTDATCRFSTLIDITAVDYTGRAKRYDVVYHLLSMYQNHRVRLRVSIREDQMMPSVISVHPSANWFEREVFDMFGILFSGHPDLRRILTDYGFRGHPLRKDFPTTGYTEVRYDEAQKRVVYEPVSLVQEYRQFDFMSPWEGAEYILPGDEKKE.

Belongs to the complex I 30 kDa subunit family. NDH-1 is composed of 14 different subunits. Subunits NuoB, C, D, E, F, and G constitute the peripheral sector of the complex.

The protein resides in the cell inner membrane. It catalyses the reaction a quinone + NADH + 5 H(+)(in) = a quinol + NAD(+) + 4 H(+)(out). Functionally, NDH-1 shuttles electrons from NADH, via FMN and iron-sulfur (Fe-S) centers, to quinones in the respiratory chain. The immediate electron acceptor for the enzyme in this species is believed to be ubiquinone. Couples the redox reaction to proton translocation (for every two electrons transferred, four hydrogen ions are translocated across the cytoplasmic membrane), and thus conserves the redox energy in a proton gradient. This chain is NADH-quinone oxidoreductase subunit C, found in Roseobacter denitrificans (strain ATCC 33942 / OCh 114) (Erythrobacter sp. (strain OCh 114)).